An 83-amino-acid polypeptide reads, in one-letter code: Small ribosomal subunit protein eS27 (83 aa).

The C4-type zinc-finger motif lies at 37-59 (CSGCFKISTVFSHATTVVVCVGC).

The protein belongs to the eukaryotic ribosomal protein eS27 family. It depends on Zn(2+) as a cofactor.

This Caenorhabditis elegans protein is Small ribosomal subunit protein eS27 (rps-27).